The chain runs to 110 residues: Defensin-like protein 296 (110 aa).

A signal peptide spans methionine 1–alanine 28. Disulfide bonds link cysteine 34/cysteine 52, cysteine 40/cysteine 57, cysteine 45/cysteine 59, cysteine 81/cysteine 102, cysteine 87/cysteine 107, and cysteine 95/cysteine 109.

The protein belongs to the DEFL family.

The protein localises to the secreted. This chain is Defensin-like protein 296, found in Arabidopsis thaliana (Mouse-ear cress).